The primary structure comprises 476 residues: Probable cytosolic Fe-S cluster assembly factor GJ13047 (476 aa).

8 residues coordinate [4Fe-4S] cluster: cysteine 23, cysteine 68, cysteine 71, cysteine 74, cysteine 187, cysteine 243, cysteine 395, and cysteine 399.

The protein belongs to the NARF family.

Its function is as follows. Component of the cytosolic iron-sulfur (Fe/S) protein assembly machinery. Required for maturation of extramitochondrial Fe/S proteins. This Drosophila virilis (Fruit fly) protein is Probable cytosolic Fe-S cluster assembly factor GJ13047.